We begin with the raw amino-acid sequence, 458 residues long: Forkhead box protein J1-A (458 aa).

The span at 68 to 78 shows a compositional bias: polar residues; the sequence is TGQHTSPSSHS. The segment at 68–99 is disordered; that stretch reads TGQHTSPSSHSHLMGSDAPSSPLAGDPASIGM. The segment at residues 142 to 236 is a DNA-binding region (fork-head); sequence KPPYSYATLI…LNGAYKKRRL (95 aa). The span at 305-321 shows a compositional bias: basic residues; the sequence is TNKRKQPYNHRTGKTPR. Residues 305–324 are disordered; it reads TNKRKQPYNHRTGKTPRRSS.

Belongs to the FOXJ1 family. As to expression, expressed in floor plate, dorsal forerunner cells, Kupffers vesicle, the floor plate, pronephric ducts and kidney.

It is found in the nucleus. Its function is as follows. Key transcription factor required for motile ciliogenesis. Activates genes essential for motile cilia formation and function. Its activity is sufficient for ectopic development of cilia that resemble motile cilia. The polypeptide is Forkhead box protein J1-A (Danio rerio (Zebrafish)).